Consider the following 464-residue polypeptide: Ribosomal protein uS12 methylthiotransferase RimO (464 aa).

The region spanning P14–A125 is the MTTase N-terminal domain. Residues C23, C59, C88, C163, C167, and C170 each coordinate [4Fe-4S] cluster. One can recognise a Radical SAM core domain in the interval T149 to E378. Positions H381–G452 constitute a TRAM domain.

The protein belongs to the methylthiotransferase family. RimO subfamily. Requires [4Fe-4S] cluster as cofactor.

Its subcellular location is the cytoplasm. The catalysed reaction is L-aspartate(89)-[ribosomal protein uS12]-hydrogen + (sulfur carrier)-SH + AH2 + 2 S-adenosyl-L-methionine = 3-methylsulfanyl-L-aspartate(89)-[ribosomal protein uS12]-hydrogen + (sulfur carrier)-H + 5'-deoxyadenosine + L-methionine + A + S-adenosyl-L-homocysteine + 2 H(+). In terms of biological role, catalyzes the methylthiolation of an aspartic acid residue of ribosomal protein uS12. The sequence is that of Ribosomal protein uS12 methylthiotransferase RimO from Parasynechococcus marenigrum (strain WH8102).